The sequence spans 677 residues: Methionine--tRNA ligase (677 aa).

Residues 15-25 (PYANGSIHLGH) carry the 'HIGH' region motif. Zn(2+) is bound by residues Cys-146, Cys-149, Cys-159, and Cys-162. The short motif at 333 to 337 (KMSKS) is the 'KMSKS' region element. Lys-336 is an ATP binding site. The tRNA-binding domain maps to 575–677 (DFAKVDLRVA…EGAKPGQQVK (103 aa)).

The protein belongs to the class-I aminoacyl-tRNA synthetase family. MetG type 1 subfamily. In terms of assembly, homodimer. The cofactor is Zn(2+).

It is found in the cytoplasm. It catalyses the reaction tRNA(Met) + L-methionine + ATP = L-methionyl-tRNA(Met) + AMP + diphosphate. Its function is as follows. Is required not only for elongation of protein synthesis but also for the initiation of all mRNA translation through initiator tRNA(fMet) aminoacylation. This is Methionine--tRNA ligase from Enterobacter sp. (strain 638).